We begin with the raw amino-acid sequence, 288 residues long: Pyridoxal kinase PdxY (288 aa).

Substrate contacts are provided by residues Ser9 and 44 to 45 (TQ). ATP contacts are provided by Asp111, Glu148, and Lys181. Residue Asp224 participates in substrate binding.

Belongs to the pyridoxine kinase family. PdxY subfamily. Homodimer. Requires Mg(2+) as cofactor.

It catalyses the reaction pyridoxal + ATP = pyridoxal 5'-phosphate + ADP + H(+). Its pathway is cofactor metabolism; pyridoxal 5'-phosphate salvage; pyridoxal 5'-phosphate from pyridoxal: step 1/1. Pyridoxal kinase involved in the salvage pathway of pyridoxal 5'-phosphate (PLP). Catalyzes the phosphorylation of pyridoxal to PLP. The protein is Pyridoxal kinase PdxY of Haemophilus influenzae (strain PittEE).